The sequence spans 377 residues: Alanine racemase (377 aa).

Lys-37 (proton acceptor; specific for D-alanine) is an active-site residue. Position 37 is an N6-(pyridoxal phosphate)lysine (Lys-37). Arg-135 lines the substrate pocket. Tyr-271 (proton acceptor; specific for L-alanine) is an active-site residue. A substrate-binding site is contributed by Met-319.

The protein belongs to the alanine racemase family. Pyridoxal 5'-phosphate serves as cofactor.

The catalysed reaction is L-alanine = D-alanine. The protein operates within amino-acid biosynthesis; D-alanine biosynthesis; D-alanine from L-alanine: step 1/1. Its function is as follows. Catalyzes the interconversion of L-alanine and D-alanine. May also act on other amino acids. In Helicobacter acinonychis (strain Sheeba), this protein is Alanine racemase (alr).